Here is a 345-residue protein sequence, read N- to C-terminus: UDP-3-O-acylglucosamine N-acyltransferase (345 aa).

Residue His239 is the Proton acceptor of the active site.

This sequence belongs to the transferase hexapeptide repeat family. LpxD subfamily. In terms of assembly, homotrimer.

The catalysed reaction is a UDP-3-O-[(3R)-3-hydroxyacyl]-alpha-D-glucosamine + a (3R)-hydroxyacyl-[ACP] = a UDP-2-N,3-O-bis[(3R)-3-hydroxyacyl]-alpha-D-glucosamine + holo-[ACP] + H(+). The protein operates within bacterial outer membrane biogenesis; LPS lipid A biosynthesis. In terms of biological role, catalyzes the N-acylation of UDP-3-O-acylglucosamine using 3-hydroxyacyl-ACP as the acyl donor. Is involved in the biosynthesis of lipid A, a phosphorylated glycolipid that anchors the lipopolysaccharide to the outer membrane of the cell. The chain is UDP-3-O-acylglucosamine N-acyltransferase from Geobacter metallireducens (strain ATCC 53774 / DSM 7210 / GS-15).